The primary structure comprises 248 residues: Probable transcriptional regulatory protein PP_1214 (248 aa).

The tract at residues 1–21 is disordered; sequence MAGHSKWANIKHRKERQDAKR.

Belongs to the TACO1 family.

It is found in the cytoplasm. The chain is Probable transcriptional regulatory protein PP_1214 from Pseudomonas putida (strain ATCC 47054 / DSM 6125 / CFBP 8728 / NCIMB 11950 / KT2440).